The sequence spans 837 residues: Phosphatidylinositol-glycan-specific phospholipase D (837 aa).

The first 23 residues, 1–23 (MSAGRLWSSLLLLLPLFCSKSSS), serve as a signal peptide directing secretion. 5 N-linked (GlcNAc...) asparagine glycosylation sites follow: N94, N267, N287, N303, and N317. 7 FG-GAP repeats span residues 364 to 425 (SPSA…GLPP), 431 to 492 (NKEG…GRLS), 494 to 554 (SPNV…RNDK), 561 to 619 (EADW…SLGK), 629 to 689 (QSTI…GATR), 701 to 767 (ALLS…TLGD), and 785 to 837 (QYVL…FSSD). Residues N477, N496, N586, N599, and N655 are each glycosylated (N-linked (GlcNAc...) asparagine).

The protein belongs to the GPLD1 family. Monomer. Widely expressed.

It localises to the secreted. The enzyme catalyses a 6-(alpha-D-glucosaminyl)-1-(1,2-diacyl-sn-glycero-3-phospho)-1D-myo-inositol + H2O = 6-(alpha-D-glucosaminyl)-1D-myo-inositol + a 1,2-diacyl-sn-glycero-3-phosphate + H(+). This protein hydrolyzes the inositol phosphate linkage in proteins anchored by phosphatidylinositol glycans (GPI-anchor) thus releasing these proteins from the membrane. The sequence is that of Phosphatidylinositol-glycan-specific phospholipase D (Gpld1) from Mus musculus (Mouse).